Consider the following 1134-residue polypeptide: Ubinuclein-1 (1134 aa).

2 disordered regions span residues 1–38 and 78–98; these read MSEP…HQDC and LQPG…EKER. The segment at 1-166 is sufficient for interaction with HIRA; sequence MSEPHRVQFT…YGGFYINSGT (166 aa). Basic and acidic residues-rich tracts occupy residues 25–38 and 81–98; these read RKEE…HQDC and GDKK…EKER. T166 bears the Phosphothreonine mark. The tract at residues 171-220 is disordered; sequence QASESEDDFIKEKKKKSPKKRKLKEGGEKIKKKKKDDTYDKEKKSKKSKF. 2 positions are modified to phosphoserine: S173 and S175. A compositionally biased stretch (basic residues) spans 182 to 193; sequence EKKKKSPKKRKL. Over residues 194–213 the composition is skewed to basic and acidic residues; sequence KEGGEKIKKKKKDDTYDKEK. K222 carries the post-translational modification N6-acetyllysine. Residues 253–268 are compositionally biased toward basic and acidic residues; the sequence is QKEKEAQKKREEEHKP. 4 disordered regions span residues 253–282, 321–358, 480–504, and 594–660; these read QKEK…LREL, SESP…EGLP, EEEK…KGGR, and PSKI…LEDS. Phosphoserine occurs at positions 323, 336, 338, and 493. The stretch at 479 to 542 forms a coiled coil; that stretch reads LEEEKDKEQR…SQDLERNNKA (64 aa). Basic and acidic residues-rich tracts occupy residues 480–493 and 598–610; these read EEEK…RICS and KVKE…DKKV. Residues S660 and S677 each carry the phosphoserine modification. Disordered stretches follow at residues 712–836 and 852–986; these read TEEK…SPTQ and QGFH…GVAK. Low complexity-rich tracts occupy residues 792-804 and 856-891; these read GPQV…GPQV and PSAP…KPHS. Over residues 892-905 the composition is skewed to polar residues; it reads VSSAGSSYKNNPFA. The segment covering 906-932 has biased composition (low complexity); that stretch reads SSISKHGVSSGSSSSGGTPVQSSVSGS. Residues 941–950 are compositionally biased toward polar residues; sequence SVGQATSRPV. Residues 973–982 are compositionally biased toward gly residues; it reads PNGDSSGGTQ. S1025 bears the Phosphoserine mark. Residues 1093–1108 show a composition bias toward low complexity; it reads GLHSSPPHAAPLPHAA. Positions 1093-1134 are disordered; it reads GLHSSPPHAAPLPHAAVPTHIPQSLPGASQLHGKGPAVPRKL.

This sequence belongs to the ubinuclein family. Component of a complex that includes at least ASF1A, CABIN1, HIRA, histone H3.3 and UBN1. Interacts with HIRA (via WD repeat domain); the interaction is direct. Interacts with ASF1A, CEBPA, TJP1, TJP2 and TJP3. As to quaternary structure, (Microbial infection) Interacts with Epstein-Barr virus BZLF1. As to expression, ubiquitous. Also expressed in numerous tumors and cancer cell lines.

It localises to the nucleus. The protein localises to the nucleoplasm. The protein resides in the PML body. Its subcellular location is the cell junction. It is found in the tight junction. Acts as a novel regulator of senescence. Involved in the formation of senescence-associated heterochromatin foci (SAHF), which represses expression of proliferation-promoting genes. Binds to proliferation-promoting genes. May be required for replication-independent chromatin assembly. The chain is Ubinuclein-1 (UBN1) from Homo sapiens (Human).